Here is a 345-residue protein sequence, read N- to C-terminus: Aspartate--ammonia ligase (345 aa).

This sequence belongs to the class-II aminoacyl-tRNA synthetase family. AsnA subfamily.

The protein localises to the cytoplasm. The catalysed reaction is L-aspartate + NH4(+) + ATP = L-asparagine + AMP + diphosphate + H(+). Its pathway is amino-acid biosynthesis; L-asparagine biosynthesis; L-asparagine from L-aspartate (ammonia route): step 1/1. The protein is Aspartate--ammonia ligase of Bacteroides thetaiotaomicron (strain ATCC 29148 / DSM 2079 / JCM 5827 / CCUG 10774 / NCTC 10582 / VPI-5482 / E50).